The following is a 403-amino-acid chain: Chromatin structure-remodeling complex subunit rsc58 (403 aa).

A compositionally biased stretch (low complexity) spans 376-389 (SLSMNGSLSPSSTN). The interval 376–403 (SLSMNGSLSPSSTNVPLQSYRRTTKSRR) is disordered. Residue Ser384 is modified to Phosphoserine.

In terms of assembly, component of the RSC complex composed of at least arp9, arp42, rsc1, rsc4, rsc7, rsc9, rsc58, sfh1, snf21, ssr1, ssr2, ssr3 and ssr4. The complex interacts with histone and histone variant components of centromeric chromatin.

It is found in the cytoplasm. The protein resides in the nucleus. In terms of biological role, component of the chromatin structure remodeling complex (RSC), which is involved in transcription regulation and nucleosome positioning. Controls particularly membrane and organelle development genes. In Schizosaccharomyces pombe (strain 972 / ATCC 24843) (Fission yeast), this protein is Chromatin structure-remodeling complex subunit rsc58 (rsc58).